The chain runs to 1018 residues: MEDGHSKTVDEVLSHFRVDPERGLSLDQVKEYQKKYGPNELPAEEGKTLWQLVLEQFDDLLVKILLLAAIISFVLALFEEHEGVEAFVEPFVILLILIANAVVGVWQERNAESAIEALKEYEPEMGKVIRGDKSGVQKIRAKEIVPGDVVEVSVGDKIPADIRLIKIYSTTIRIDQSILTGESVSVIKHTDAVPDPRAVNQDKKNILFSGTNVAAGKARGVVIGTGLNTAIGKIRTEMSETEEIKTPLQQKLDEFGEQLSKVISLICVAVWAINIGHFNDPAHGGSWIKGAVYYFKIAVALAVAAIPEGLPAVITTCLALGTRRMAKKNAIVRSLPSVETLGCTSVICSDKTGTLTTNQMSVSRMFIFEKIEGNDSSFTEFEISGSTYEPIGEVTLNGQRIKAADYETLHELGTICIMCNDSAIDFNETKKVFEKVGEATETALIVLAEKLNPFNVAKQGLDRRSSAICVRQEIETKWKKEFTLEFSRDRKSMSSYCTPLKASKLGNGPKLFCKGAPEGVLERCTHARVGSTKVPLTQTLKQRILDLTRTYGTGRDTLRCLALATADSPMKPDDMDLNDSTKFYTYEVNLTFVGVVGMLDPPRKEVQDSIVRCRAAGIRVIVITGDNKATAEAICRRIGVFGEDEDTTGKSYSGREFDDLSVSEQREACSRARLFSRVEPAHKSKIVEFLQSMNEISAMTGDGVNDAPALKKAEIGIAMGSGTAVAKSAAEMVLADDNFSSIVAAVEEGRAIYNNMKQFIRYLISSNIGEVVSIFLTAALGLPEALIPVQLLWVNLVTDGLPATALGFNPPDLDIMTKPPRKADEGLISGWLFFRYMAIGGYVGCATVGGAAWWFMFSETGPQLSYWQLTHHLSCLGGGEEFKGIDCKIFNDPHPMTMALSVLVTIEMLNAMNSLSENQSLVQMPPWCNIWLIASMCLSFALHFVILYVDVLSTVFQVTPLDGNEWMTVMKFSLPVVLLDEILKFVARRISDGESYIKNMHGLVLAWAVFFAYIIWGP.

Over 1-48 (MEDGHSKTVDEVLSHFRVDPERGLSLDQVKEYQKKYGPNELPAEEGKT) the chain is Cytoplasmic. Residues 49-69 (LWQLVLEQFDDLLVKILLLAA) form a helical membrane-spanning segment. Topologically, residues 70–88 (IISFVLALFEEHEGVEAFV) are lumenal. The helical transmembrane segment at 89–109 (EPFVILLILIANAVVGVWQER) threads the bilayer. Over 110–252 (NAESAIEALK…EIKTPLQQKL (143 aa)) the chain is Cytoplasmic. The helical transmembrane segment at 253–272 (DEFGEQLSKVISLICVAVWA) threads the bilayer. The Lumenal portion of the chain corresponds to 273-294 (INIGHFNDPAHGGSWIKGAVYY). A helical transmembrane segment spans residues 295–312 (FKIAVALAVAAIPEGLPA). The Ca(2+) site is built by valine 303, alanine 304, isoleucine 306, and glutamate 308. Over 313–756 (VITTCLALGT…EEGRAIYNNM (444 aa)) the chain is Cytoplasmic. The active-site 4-aspartylphosphate intermediate is the aspartate 350. 2 residues coordinate Mg(2+): aspartate 702 and aspartate 706. A helical transmembrane segment spans residues 757–776 (KQFIRYLISSNIGEVVSIFL). Ca(2+) contacts are provided by asparagine 767 and glutamate 770. Residues 777 to 786 (TAALGLPEAL) are Lumenal-facing. A helical membrane pass occupies residues 787 to 807 (IPVQLLWVNLVTDGLPATALG). Ca(2+)-binding residues include asparagine 795, threonine 798, and aspartate 799. The Cytoplasmic segment spans residues 808–827 (FNPPDLDIMTKPPRKADEGL). The chain crosses the membrane as a helical span at residues 828–850 (ISGWLFFRYMAIGGYVGCATVGG). At 851–896 (AAWWFMFSETGPQLSYWQLTHHLSCLGGGEEFKGIDCKIFNDPHPM) the chain is on the lumenal side. A helical membrane pass occupies residues 897–916 (TMALSVLVTIEMLNAMNSLS). A Ca(2+)-binding site is contributed by glutamate 907. The Cytoplasmic portion of the chain corresponds to 917–929 (ENQSLVQMPPWCN). Residues 930–948 (IWLIASMCLSFALHFVILY) form a helical membrane-spanning segment. Residues 949–963 (VDVLSTVFQVTPLDG) are Lumenal-facing. A helical membrane pass occupies residues 964–984 (NEWMTVMKFSLPVVLLDEILK). At 985-1018 (FVARRISDGESYIKNMHGLVLAWAVFFAYIIWGP) the chain is on the cytoplasmic side.

This sequence belongs to the cation transport ATPase (P-type) (TC 3.A.3) family.

The protein localises to the endoplasmic reticulum membrane. Its subcellular location is the sarcoplasmic reticulum membrane. The enzyme catalyses Ca(2+)(in) + ATP + H2O = Ca(2+)(out) + ADP + phosphate + H(+). Functionally, this magnesium-dependent enzyme catalyzes the hydrolysis of ATP coupled with the transport of calcium. The chain is Calcium-transporting ATPase sarcoplasmic/endoplasmic reticulum type from Anopheles gambiae (African malaria mosquito).